Here is a 733-residue protein sequence, read N- to C-terminus: Ribosomal protein S6 kinase 2 alpha (733 aa).

A disordered region spans residues 18-38; it reads EDPENGHGSPEEGGRHTSKDE. Positions 62-321 constitute a Protein kinase 1 domain; it reads FVLLKVLGQG…AEEIKRQPFF (260 aa). ATP-binding positions include 68–76 and K94; that span reads LGQGSFGKV. D187 functions as the Proton acceptor in the catalytic mechanism. Residue S221 is modified to Phosphoserine. Positions 322–391 constitute an AGC-kinase C-terminal domain; sequence STIDWNKLFR…VAPALVEEDA (70 aa). Phosphothreonine is present on T359. The residue at position 363 (S363) is a Phosphoserine. A Phosphoserine; by autocatalysis modification is found at S380. The region spanning 416-673 is the Protein kinase 2 domain; that stretch reads YTVRETIGVG…AKQVLQHEWI (258 aa). Residues 422–430 and K445 contribute to the ATP site; that span reads IGVGSYSVC. The active-site Proton acceptor is D533. The residue at position 571 (T571) is a Phosphothreonine. S730 is subject to Phosphoserine.

The protein belongs to the protein kinase superfamily. AGC Ser/Thr protein kinase family. S6 kinase subfamily. Requires Mg(2+) as cofactor. Autophosphorylated on Ser-380, as part of the activation process.

It carries out the reaction L-seryl-[protein] + ATP = O-phospho-L-seryl-[protein] + ADP + H(+). It catalyses the reaction L-threonyl-[protein] + ATP = O-phospho-L-threonyl-[protein] + ADP + H(+). With respect to regulation, activated by multiple phosphorylations on threonine and serine residues. In terms of biological role, serine/threonine kinase that may play a role in mediating the growth-factor and stress induced activation of transcription. This Xenopus laevis (African clawed frog) protein is Ribosomal protein S6 kinase 2 alpha (rps6ka).